The chain runs to 265 residues: MIDLFSPKGKKDTVSTTNKDKSFEDGIVNIINKIKAGDKLLREEFINSYTPYIIRTVSNLTGKYVDVENSDEFSVGLAAFNEAIDSFDEGKNMFFFKFSTLVIKRRLTDYARHNKKHCHVYPFTYFEDKNNSYFEQIHLKSEIDLQNTYEISREIELYEQKLRDFGISLEHLAKCAPKHKDSKSLCIKIAKVIADNKELFSKLERTRNIPKTELLKLLKINKKTIERNRTFIIAAALIFGNDFNLLKDFLDISEPGGDNIERSTK.

A Polymerase core binding motif is present at residues 71–84 (DEFSVGLAAFNEAI). A DNA-binding region (H-T-H motif) is located at residues 211–230 (KTELLKLLKINKKTIERNRT).

The protein belongs to the sigma-70 factor family. SigI subfamily. As to quaternary structure, interacts with RsgI2.

The protein resides in the cytoplasm. With respect to regulation, negatively regulated by the anti-sigma-I factor RsgI2. Binding of the polysaccharide substrate to RsgI2 may lead to the release and activation of SigI2. Its function is as follows. Sigma factors are initiation factors that promote the attachment of RNA polymerase to specific initiation sites and are then released. This sigma factor is involved in regulation of cellulosomal genes via an external polysaccharide-sensing mechanism. This Acetivibrio thermocellus (strain ATCC 27405 / DSM 1237 / JCM 9322 / NBRC 103400 / NCIMB 10682 / NRRL B-4536 / VPI 7372) (Clostridium thermocellum) protein is RNA polymerase sigma factor SigI2.